The sequence spans 522 residues: Lysine--tRNA ligase (522 aa).

A 'HIGH' region motif is present at residues 44 to 52 (PSGLPHIGT). Positions 290–294 (KISKS) match the 'KMSKS' region motif. ATP is bound at residue K293.

It belongs to the class-I aminoacyl-tRNA synthetase family.

The protein localises to the cytoplasm. The enzyme catalyses tRNA(Lys) + L-lysine + ATP = L-lysyl-tRNA(Lys) + AMP + diphosphate. This Rickettsia conorii (strain ATCC VR-613 / Malish 7) protein is Lysine--tRNA ligase.